The primary structure comprises 173 residues: C-phycocyanin beta subunit (173 aa).

N4-methylasparagine is present on Asn-73. Residues Cys-83 and Cys-154 each contribute to the (2R,3E)-phycocyanobilin site.

This sequence belongs to the phycobiliprotein family. As to quaternary structure, heterodimer of an alpha and a beta subunit. Part of 2 PBS rod complexes, the conventional PBS rod and a photosystem I-specific CpcL-PBS rod. In terms of processing, contains two covalently linked bilin chromophores.

Its subcellular location is the cellular thylakoid membrane. Its function is as follows. Light-harvesting photosynthetic bile pigment-protein from the phycobiliprotein complex (phycobilisome, PBS). Phycocyanin is the major phycobiliprotein in the PBS rod. The protein is C-phycocyanin beta subunit (cpcB) of Nostoc sp. (strain PCC 7120 / SAG 25.82 / UTEX 2576).